We begin with the raw amino-acid sequence, 474 residues long: Adenosylhomocysteinase (474 aa).

Residues Thr-53, Asp-135, and Glu-197 each coordinate substrate. Thr-198 to Thr-200 is an NAD(+) binding site. Substrate is bound by residues Lys-227 and Asp-231. NAD(+) contacts are provided by residues Asn-232, Gly-261–Gly-266, Glu-284, Asn-319, Ile-340–His-342, and Asn-388.

It belongs to the adenosylhomocysteinase family. NAD(+) is required as a cofactor.

The protein resides in the cytoplasm. It carries out the reaction S-adenosyl-L-homocysteine + H2O = L-homocysteine + adenosine. Its pathway is amino-acid biosynthesis; L-homocysteine biosynthesis; L-homocysteine from S-adenosyl-L-homocysteine: step 1/1. Functionally, may play a key role in the regulation of the intracellular concentration of adenosylhomocysteine. The protein is Adenosylhomocysteinase of Corynebacterium glutamicum (strain ATCC 13032 / DSM 20300 / JCM 1318 / BCRC 11384 / CCUG 27702 / LMG 3730 / NBRC 12168 / NCIMB 10025 / NRRL B-2784 / 534).